Consider the following 2388-residue polypeptide: Highly reducing polyketide synthase Preu1 (2388 aa).

One can recognise a Ketosynthase family 3 (KS3) domain in the interval 7–432; that stretch reads NDDIAIVGLA…GTNAHVILDD (426 aa). Residues Cys-180, His-315, and His-355 each act as for beta-ketoacyl synthase activity in the active site. Residues 549 to 875 form a malonyl-CoA:ACP transacylase (MAT) domain region; it reads GFVFTGQGAQ…SSVLMRGEDG (327 aa). The For malonyltransferase activity role is filled by Ser-641. Residues 940 to 1074 are N-terminal hotdog fold; sequence HDLLGAPTQD…GLGKIHYRPE (135 aa). The PKS/mFAS DH domain maps to 940 to 1256; it reads HDLLGAPTQD…CRELPNGNSQ (317 aa). Residues 941–1251 form a dehydratase (DH) domain region; sequence DLLGAPTQDS…VEGLRCRELP (311 aa). Residue His-972 is the Proton acceptor; for dehydratase activity of the active site. The interval 1102–1256 is C-terminal hotdog fold; the sequence is TASISPVDFY…CRELPNGNSQ (155 aa). Catalysis depends on Asp-1167, which acts as the Proton donor; for dehydratase activity. Residues 1676–1983 are enoyl reductase (ER) domain; that stretch reads KLPSDARFTS…VPTGLGKAVL (308 aa). The ketoreductase (KR) domain stretch occupies residues 2007-2191; that stretch reads ATYVLAGGLG…AATSVDLGLM (185 aa). The Carrier domain occupies 2303-2380; sequence QANGIVLEAL…ALAEKISKAS (78 aa). Ser-2340 is modified (O-(pantetheine 4'-phosphoryl)serine).

Pantetheine 4'-phosphate serves as cofactor.

Highly reducing polyketide synthase; part of a gene cluster that mediates the biosynthesis of a yet unidentified natural product. This is Highly reducing polyketide synthase Preu1 from Preussia isomera (Coprophilous fungus).